Consider the following 81-residue polypeptide: N.vectensis toxin 4 (81 aa).

The first 20 residues, 1–20, serve as a signal peptide directing secretion; it reads MRSSWMFVICFAMLILYTNG. 3 cysteine pairs are disulfide-bonded: C46–C75, C48–C70, and C63–C76.

Expressed in ectodermal gland cells. In adult female tissues, highly transcribed in mesenteries (gametes-producing tissue) and slightly transcribed in tentacles, pharynx and physa.

Its function is as follows. Has toxic effects on zebrafish larvae. It causes contractile paralysis and twitching of the tail within 30 minutes, followed by death within 40 minutes. Does not show any toxicity when injected into arthropods (cherry shrimps or grass shrimps). This is N.vectensis toxin 4 from Nematostella vectensis (Starlet sea anemone).